Reading from the N-terminus, the 283-residue chain is Bifunctional protein FolD (283 aa).

Residues 165–167 (GRS), serine 190, and threonine 231 each bind NADP(+).

It belongs to the tetrahydrofolate dehydrogenase/cyclohydrolase family. In terms of assembly, homodimer.

The catalysed reaction is (6R)-5,10-methylene-5,6,7,8-tetrahydrofolate + NADP(+) = (6R)-5,10-methenyltetrahydrofolate + NADPH. It carries out the reaction (6R)-5,10-methenyltetrahydrofolate + H2O = (6R)-10-formyltetrahydrofolate + H(+). It functions in the pathway one-carbon metabolism; tetrahydrofolate interconversion. Its function is as follows. Catalyzes the oxidation of 5,10-methylenetetrahydrofolate to 5,10-methenyltetrahydrofolate and then the hydrolysis of 5,10-methenyltetrahydrofolate to 10-formyltetrahydrofolate. The sequence is that of Bifunctional protein FolD from Nocardia farcinica (strain IFM 10152).